Consider the following 238-residue polypeptide: Heme oxygenase (238 aa).

His-17 lines the heme b pocket.

Belongs to the heme oxygenase family.

Its subcellular location is the plastid. It localises to the chloroplast. The enzyme catalyses heme b + 3 reduced [NADPH--hemoprotein reductase] + 3 O2 = biliverdin IXalpha + CO + Fe(2+) + 3 oxidized [NADPH--hemoprotein reductase] + 3 H2O + H(+). Its function is as follows. Catalyzes the opening of the heme ring with the release of iron. Key enzyme in the synthesis of the chromophoric part of the photosynthetic antennae. The chain is Heme oxygenase (pbsA) from Pyropia yezoensis (Susabi-nori).